The sequence spans 320 residues: ATP-dependent 6-phosphofructokinase (320 aa).

An ATP-binding site is contributed by Gly12. ADP is bound at residue 22–26 (RGVVR). ATP contacts are provided by residues 73-74 (RF) and 103-106 (GDGS). Asp104 provides a ligand contact to Mg(2+). 126–128 (TID) lines the substrate pocket. The active-site Proton acceptor is the Asp128. Arg155 provides a ligand contact to ADP. Substrate-binding positions include Arg163 and 170 to 172 (MGR). Residues 186-188 (GCE), Lys212, and 214-216 (KKH) each bind ADP. Substrate-binding positions include Glu223, Arg244, and 250–253 (HIQR).

This sequence belongs to the phosphofructokinase type A (PFKA) family. ATP-dependent PFK group I subfamily. Prokaryotic clade 'B1' sub-subfamily. In terms of assembly, homotetramer. The cofactor is Mg(2+).

It is found in the cytoplasm. The enzyme catalyses beta-D-fructose 6-phosphate + ATP = beta-D-fructose 1,6-bisphosphate + ADP + H(+). It participates in carbohydrate degradation; glycolysis; D-glyceraldehyde 3-phosphate and glycerone phosphate from D-glucose: step 3/4. Its activity is regulated as follows. Allosterically activated by ADP and other diphosphonucleosides, and allosterically inhibited by phosphoenolpyruvate. In terms of biological role, catalyzes the phosphorylation of D-fructose 6-phosphate to fructose 1,6-bisphosphate by ATP, the first committing step of glycolysis. The polypeptide is ATP-dependent 6-phosphofructokinase (Aliivibrio salmonicida (strain LFI1238) (Vibrio salmonicida (strain LFI1238))).